The primary structure comprises 676 residues: RNA helicase NPH-II (676 aa).

Residues 172–347 (FSAWISHRPV…VFLPNPAFIH (176 aa)) form the Helicase ATP-binding domain. 185–192 (GGTGVGKT) lines the ATP pocket. The DEXH box signature appears at 296–299 (DEVH). One can recognise a Helicase C-terminal domain in the interval 366-535 (NPSSRMAYIE…NYILYANKFN (170 aa)).

The protein belongs to the DEAD box helicase family. DEAH subfamily. As to quaternary structure, monomer.

It localises to the virion. The catalysed reaction is ATP + H2O = ADP + phosphate + H(+). NTP-dependent helicase that catalyzes unidirectional unwinding of 3'tailed duplex RNAs and plays an important role during transcription of early mRNAs, presumably by preventing R-loop formation behind the elongating RNA polymerase. Might also play a role in the export of newly synthesized mRNA chains out of the core into the cytoplasm. Required for replication and propagation of viral particles. The chain is RNA helicase NPH-II (OPG084) from Homo sapiens (Human).